Reading from the N-terminus, the 260-residue chain is Diphthine synthase (260 aa).

Residues Leu-9, Asp-85, Ile-88, 113-114 (TA), Leu-168, Ala-202, and His-227 contribute to the S-adenosyl-L-methionine site.

It belongs to the diphthine synthase family. Homodimer.

The catalysed reaction is 2-[(3S)-amino-3-carboxypropyl]-L-histidyl-[translation elongation factor 2] + 3 S-adenosyl-L-methionine = diphthine-[translation elongation factor 2] + 3 S-adenosyl-L-homocysteine + 3 H(+). Its pathway is protein modification; peptidyl-diphthamide biosynthesis. Its function is as follows. S-adenosyl-L-methionine-dependent methyltransferase that catalyzes the trimethylation of the amino group of the modified target histidine residue in translation elongation factor 2 (EF-2), to form an intermediate called diphthine. The three successive methylation reactions represent the second step of diphthamide biosynthesis. In Haloquadratum walsbyi (strain DSM 16790 / HBSQ001), this protein is Diphthine synthase.